Reading from the N-terminus, the 332-residue chain is 4-hydroxythreonine-4-phosphate dehydrogenase (332 aa).

Substrate-binding residues include H138 and T139. The a divalent metal cation site is built by H168, H213, and H269. Residues K277, N286, and R295 each coordinate substrate.

It belongs to the PdxA family. In terms of assembly, homodimer. Zn(2+) is required as a cofactor. It depends on Mg(2+) as a cofactor. Requires Co(2+) as cofactor.

Its subcellular location is the cytoplasm. The catalysed reaction is 4-(phosphooxy)-L-threonine + NAD(+) = 3-amino-2-oxopropyl phosphate + CO2 + NADH. Its pathway is cofactor biosynthesis; pyridoxine 5'-phosphate biosynthesis; pyridoxine 5'-phosphate from D-erythrose 4-phosphate: step 4/5. Functionally, catalyzes the NAD(P)-dependent oxidation of 4-(phosphooxy)-L-threonine (HTP) into 2-amino-3-oxo-4-(phosphooxy)butyric acid which spontaneously decarboxylates to form 3-amino-2-oxopropyl phosphate (AHAP). In Vibrio parahaemolyticus serotype O3:K6 (strain RIMD 2210633), this protein is 4-hydroxythreonine-4-phosphate dehydrogenase.